Here is a 161-residue protein sequence, read N- to C-terminus: Phosphopantetheine adenylyltransferase (161 aa).

S11 is a substrate binding site. Residues 11–12 (SF) and H19 contribute to the ATP site. The substrate site is built by K43, L75, and R89. ATP contacts are provided by residues 90–92 (GLR), E100, and 125–131 (YSFISSS).

Belongs to the bacterial CoaD family. In terms of assembly, homohexamer. Requires Mg(2+) as cofactor.

The protein localises to the cytoplasm. It carries out the reaction (R)-4'-phosphopantetheine + ATP + H(+) = 3'-dephospho-CoA + diphosphate. It functions in the pathway cofactor biosynthesis; coenzyme A biosynthesis; CoA from (R)-pantothenate: step 4/5. In terms of biological role, reversibly transfers an adenylyl group from ATP to 4'-phosphopantetheine, yielding dephospho-CoA (dPCoA) and pyrophosphate. The sequence is that of Phosphopantetheine adenylyltransferase from Staphylococcus epidermidis (strain ATCC 35984 / DSM 28319 / BCRC 17069 / CCUG 31568 / BM 3577 / RP62A).